Consider the following 500-residue polypeptide: Abscisic acid 8'-hydroxylase 3 (500 aa).

A helical transmembrane segment spans residues 3-23 (ASFVIVIVISFFISLAFMCYV). Cys426 lines the heme pocket.

The protein belongs to the cytochrome P450 family. Heme serves as cofactor.

It is found in the membrane. It catalyses the reaction 2-cis-(+)-abscisate + reduced [NADPH--hemoprotein reductase] + O2 = (+)-8'-hydroxyabscisate + oxidized [NADPH--hemoprotein reductase] + H2O + H(+). It functions in the pathway plant hormone degradation; abscisic acid degradation. Functionally, involved in the oxidative degradation of abscisic acid. The polypeptide is Abscisic acid 8'-hydroxylase 3 (CYP707A7) (Oryza sativa subsp. japonica (Rice)).